A 482-amino-acid polypeptide reads, in one-letter code: Rhamnulokinase (482 aa).

Residue 13–17 (ASSGR) coordinates ATP. Substrate contacts are provided by residues G83 and 232–234 (HDT). D233 acts as the Proton acceptor in catalysis. Residue T255 participates in ATP binding. N292 lines the substrate pocket. N300 contacts ATP. A disulfide bond links C349 and C366. G398 serves as a coordination point for ATP. C409 and C413 are joined by a disulfide.

The protein belongs to the rhamnulokinase family. It depends on Mg(2+) as a cofactor.

The catalysed reaction is L-rhamnulose + ATP = L-rhamnulose 1-phosphate + ADP + H(+). Its pathway is carbohydrate degradation; L-rhamnose degradation; glycerone phosphate from L-rhamnose: step 2/3. In terms of biological role, involved in the catabolism of L-rhamnose (6-deoxy-L-mannose). Catalyzes the transfer of the gamma-phosphate group from ATP to the 1-hydroxyl group of L-rhamnulose to yield L-rhamnulose 1-phosphate. This is Rhamnulokinase from Mannheimia succiniciproducens (strain KCTC 0769BP / MBEL55E).